The chain runs to 480 residues: Ribosomal RNA small subunit methyltransferase F (480 aa).

S-adenosyl-L-methionine contacts are provided by residues 125–131 (AAAPGSK), E149, D176, and D194. The active-site Nucleophile is the C247.

This sequence belongs to the class I-like SAM-binding methyltransferase superfamily. RsmB/NOP family.

The protein localises to the cytoplasm. It carries out the reaction cytidine(1407) in 16S rRNA + S-adenosyl-L-methionine = 5-methylcytidine(1407) in 16S rRNA + S-adenosyl-L-homocysteine + H(+). Specifically methylates the cytosine at position 1407 (m5C1407) of 16S rRNA. The polypeptide is Ribosomal RNA small subunit methyltransferase F (Enterobacter sp. (strain 638)).